The chain runs to 257 residues: Global transcriptional regulator CodY (257 aa).

A GAF domain region spans residues 1–155 (MSLLSKTREL…AATVIGMEIL (155 aa)). Residues 203-222 (ASKVADRVGITRSVIVNALR) constitute a DNA-binding region (H-T-H motif).

The protein belongs to the CodY family.

It localises to the cytoplasm. Its function is as follows. DNA-binding global transcriptional regulator which is involved in the adaptive response to starvation and acts by directly or indirectly controlling the expression of numerous genes in response to nutrient availability. During rapid exponential growth, CodY is highly active and represses genes whose products allow adaptation to nutrient depletion. In Staphylococcus saprophyticus subsp. saprophyticus (strain ATCC 15305 / DSM 20229 / NCIMB 8711 / NCTC 7292 / S-41), this protein is Global transcriptional regulator CodY.